The following is a 275-amino-acid chain: Phosphatidylglycerol--prolipoprotein diacylglyceryl transferase (275 aa).

A run of 3 helical transmembrane segments spans residues 18 to 38 (IEVH…YFIA), 55 to 75 (IIFW…VIFQ), and 89 to 109 (IWHG…TGVI). Arg137 contributes to the a 1,2-diacyl-sn-glycero-3-phospho-(1'-sn-glycerol) binding site. Transmembrane regions (helical) follow at residues 203-223 (IGET…FVEG) and 235-255 (IRVA…MIIY).

Belongs to the Lgt family.

The protein localises to the cell membrane. It carries out the reaction L-cysteinyl-[prolipoprotein] + a 1,2-diacyl-sn-glycero-3-phospho-(1'-sn-glycerol) = an S-1,2-diacyl-sn-glyceryl-L-cysteinyl-[prolipoprotein] + sn-glycerol 1-phosphate + H(+). Its pathway is protein modification; lipoprotein biosynthesis (diacylglyceryl transfer). Its function is as follows. Catalyzes the transfer of the diacylglyceryl group from phosphatidylglycerol to the sulfhydryl group of the N-terminal cysteine of a prolipoprotein, the first step in the formation of mature lipoproteins. In Staphylococcus carnosus (strain TM300), this protein is Phosphatidylglycerol--prolipoprotein diacylglyceryl transferase.